The following is a 275-amino-acid chain: Phosphate import ATP-binding protein PstB 1 (275 aa).

An ABC transporter domain is found at 22–261 (FNVEGVKVYY…SPTEQMFNSP (240 aa)). 54–61 (GPSGCGKS) is an ATP binding site.

Belongs to the ABC transporter superfamily. Phosphate importer (TC 3.A.1.7) family. As to quaternary structure, the complex is composed of two ATP-binding proteins (PstB), two transmembrane proteins (PstC and PstA) and a solute-binding protein (PstS).

The protein localises to the cell inner membrane. It catalyses the reaction phosphate(out) + ATP + H2O = ADP + 2 phosphate(in) + H(+). Part of the ABC transporter complex PstSACB involved in phosphate import. Responsible for energy coupling to the transport system. The protein is Phosphate import ATP-binding protein PstB 1 of Trichormus variabilis (strain ATCC 29413 / PCC 7937) (Anabaena variabilis).